The sequence spans 688 residues: Potassium-transporting ATPase ATP-binding subunit (688 aa).

The next 4 membrane-spanning stretches (helical) occupy residues 34–54 (PVMF…LAIL), 62–82 (ALFT…ANFA), 219–239 (VALT…TATL), and 260–280 (VLVA…LSAI). Residue Asp313 is the 4-aspartylphosphate intermediate of the active site. ATP is bound by residues Asp350, Glu354, 383–390 (FSAQTRMS), and Lys401. Asp524 and Asp528 together coordinate Mg(2+). Helical transmembrane passes span 594 to 614 (FAII…LNVM), 622 to 642 (AILS…PLAL), and 667 to 687 (GLLV…ALIM).

It belongs to the cation transport ATPase (P-type) (TC 3.A.3) family. Type IA subfamily. In terms of assembly, the system is composed of three essential subunits: KdpA, KdpB and KdpC.

Its subcellular location is the cell inner membrane. It catalyses the reaction K(+)(out) + ATP + H2O = K(+)(in) + ADP + phosphate + H(+). In terms of biological role, part of the high-affinity ATP-driven potassium transport (or Kdp) system, which catalyzes the hydrolysis of ATP coupled with the electrogenic transport of potassium into the cytoplasm. This subunit is responsible for energy coupling to the transport system and for the release of the potassium ions to the cytoplasm. In Yersinia enterocolitica serotype O:8 / biotype 1B (strain NCTC 13174 / 8081), this protein is Potassium-transporting ATPase ATP-binding subunit.